A 320-amino-acid chain; its full sequence is Nod factor export ATP-binding protein I (320 aa).

Residues 15–245 form the ABC transporter domain; sequence VSATGVWKKR…LGALKILEID (231 aa). 47–54 lines the ATP pocket; the sequence is GTNGAGKS.

It belongs to the ABC transporter superfamily. Lipooligosaccharide exporter (TC 3.A.1.102) family. The complex is composed of two ATP-binding proteins (NodI) and two transmembrane proteins (NodJ).

The protein resides in the cell inner membrane. Functionally, part of the ABC transporter complex NodIJ involved in the export of the nodulation factors (Nod factors), the bacterial signal molecules that induce symbiosis and subsequent nodulation induction. Nod factors are LCO (lipo-chitin oligosaccharide), a modified beta-1,4-linked N-acetylglucosamine oligosaccharide. This subunit is responsible for energy coupling to the transport system. This is Nod factor export ATP-binding protein I from Azorhizobium caulinodans (strain ATCC 43989 / DSM 5975 / JCM 20966 / LMG 6465 / NBRC 14845 / NCIMB 13405 / ORS 571).